The chain runs to 341 residues: Small ribosomal subunit biogenesis GTPase RsgA (341 aa).

The CP-type G domain occupies 112-268; that stretch reads RQQLIAANLD…LIDTPGMREL (157 aa). Residues 157-160 and 210-218 contribute to the GTP site; these read TKVD and GSSGAGKST. C290, C295, H297, and C303 together coordinate Zn(2+).

It belongs to the TRAFAC class YlqF/YawG GTPase family. RsgA subfamily. As to quaternary structure, monomer. Associates with 30S ribosomal subunit, binds 16S rRNA. Requires Zn(2+) as cofactor.

It localises to the cytoplasm. One of several proteins that assist in the late maturation steps of the functional core of the 30S ribosomal subunit. Helps release RbfA from mature subunits. May play a role in the assembly of ribosomal proteins into the subunit. Circularly permuted GTPase that catalyzes slow GTP hydrolysis, GTPase activity is stimulated by the 30S ribosomal subunit. The protein is Small ribosomal subunit biogenesis GTPase RsgA of Xylella fastidiosa (strain Temecula1 / ATCC 700964).